Here is a 687-residue protein sequence, read N- to C-terminus: Glycine--tRNA ligase beta subunit (687 aa).

This sequence belongs to the class-II aminoacyl-tRNA synthetase family. As to quaternary structure, tetramer of two alpha and two beta subunits.

It is found in the cytoplasm. It carries out the reaction tRNA(Gly) + glycine + ATP = glycyl-tRNA(Gly) + AMP + diphosphate. This Neisseria meningitidis serogroup B (strain ATCC BAA-335 / MC58) protein is Glycine--tRNA ligase beta subunit.